The chain runs to 74 residues: uncharacterized protein (74 aa).

This is an uncharacterized protein from Homo sapiens (Human).